A 361-amino-acid polypeptide reads, in one-letter code: Inhibin alpha chain (361 aa).

The first 21 residues, 1 to 21, serve as a signal peptide directing secretion; it reads MLPLLLPLQLLLLMVMKGGHG. Positions 22–64 are excised as a propeptide; the sequence is CQGPELDRELVLAKVRALVLDALGPPNASKDGGKPVAQRLTRR. The interval 45 to 82 is disordered; the sequence is GPPNASKDGGKPVAQRLTRRHAHTGGSTRRSMENEDED. N48, N144, and N266 each carry an N-linked (GlcNAc...) asparagine glycan. A propeptide spans 65–230 (inhibin alpha N-terminal region); sequence HAHTGGSTRR…PPSVGERARR (166 aa). 3 disulfides stabilise this stretch: C260-C323, C289-C358, and C293-C360.

The protein belongs to the TGF-beta family. Dimeric, linked by one or more disulfide bonds. Activin B is a dimer of alpha and beta-B. Inhibin A is a dimer of alpha and beta-A. Inhibin B is a dimer of alpha and beta-B. Interacts with TGFBR3L; this interaction regulates female fertility. Post-translationally, proteolytic processing yields a number of bioactive forms, consisting either solely of the mature alpha chain, of the most N-terminal propeptide linked through a disulfide bond to the mature alpha chain, or of the entire proprotein.

It is found in the secreted. Inhibins and activins inhibit and activate, respectively, the secretion of follitropin by the pituitary gland. Inhibins/activins are involved in regulating a number of diverse functions such as hypothalamic and pituitary hormone secretion, gonadal hormone secretion, germ cell development and maturation, erythroid differentiation, insulin secretion, nerve cell survival, embryonic axial development or bone growth, depending on their subunit composition. Inhibins appear to oppose the functions of activins. In terms of biological role, inhibin A is a dimer of alpha/INHA and beta-A/INHBA that functions as a feedback regulator in the hypothalamic-pituitary-gonadal (HPG) axis. Inhibits the secretion of FSH from the anterior pituitary gland by acting on pituitary gonadotrope cells. Antagonizes activin A by binding to the proteoglycan, betaglycan, and forming a stable complex with and, thereby, sequestering type II activin receptors while excluding type I receptor. Functionally, inhibin B is a dimer of alpha and beta-B that plays a crucial role in the regulation of the reproductive system by inhibiting the secretion of follicle-stimulating hormone (FSH) from the anterior pituitary gland. Thereby, maintains reproductive homeostasis in both males and females. Acts as a more potent suppressor of FSH release than inhibin A. Functions as competitive receptor antagonist binding activin type II receptors with high affinity in the presence of the TGF-beta type III coreceptor/TGFBR3L. This chain is Inhibin alpha chain (INHA), found in Trichosurus vulpecula (Brush-tailed possum).